The following is a 138-amino-acid chain: Large ribosomal subunit protein uL16 (138 aa).

Basic residues predominate over residues 1 to 16 (MLIPKRVKFRRQHRPN). The tract at residues 1–25 (MLIPKRVKFRRQHRPNRSGMSKGGN) is disordered.

This sequence belongs to the universal ribosomal protein uL16 family. As to quaternary structure, part of the 50S ribosomal subunit.

Its function is as follows. Binds 23S rRNA and is also seen to make contacts with the A and possibly P site tRNAs. The chain is Large ribosomal subunit protein uL16 from Corynebacterium urealyticum (strain ATCC 43042 / DSM 7109).